Reading from the N-terminus, the 317-residue chain is Transaldolase (317 aa).

The active-site Schiff-base intermediate with substrate is lysine 126.

It belongs to the transaldolase family. Type 1 subfamily. In terms of assembly, homodimer.

It is found in the cytoplasm. It carries out the reaction D-sedoheptulose 7-phosphate + D-glyceraldehyde 3-phosphate = D-erythrose 4-phosphate + beta-D-fructose 6-phosphate. It functions in the pathway carbohydrate degradation; pentose phosphate pathway; D-glyceraldehyde 3-phosphate and beta-D-fructose 6-phosphate from D-ribose 5-phosphate and D-xylulose 5-phosphate (non-oxidative stage): step 2/3. Its function is as follows. Transaldolase is important for the balance of metabolites in the pentose-phosphate pathway. In Burkholderia orbicola (strain MC0-3), this protein is Transaldolase.